An 864-amino-acid polypeptide reads, in one-letter code: Nitrate reductase [NADH] (864 aa).

Residue cysteine 139 participates in Mo-molybdopterin binding. A Cytochrome b5 heme-binding domain is found at 497–572 (PRQYTMEEVA…LAQYYIGDLV (76 aa)). Residues histidine 532 and histidine 555 each coordinate heme. The 113-residue stretch at 606-718 (RQKVKLPLIE…KGPLGHFVYD (113 aa)) folds into the FAD-binding FR-type domain. FAD contacts are provided by residues 658 to 661 (RAYT), 675 to 679 (LIKVY), phenylalanine 680, phenylalanine 687, 692 to 694 (KMS), and threonine 746.

Belongs to the nitrate reductase family. Homodimer. It depends on FAD as a cofactor. The cofactor is heme. Mo-molybdopterin serves as cofactor.

It carries out the reaction nitrite + NAD(+) + H2O = nitrate + NADH + H(+). In terms of biological role, nitrate reductase is a key enzyme involved in the first step of nitrate assimilation in plants, fungi and bacteria. The polypeptide is Nitrate reductase [NADH] (NITA) (Volvox carteri (Green alga)).